Reading from the N-terminus, the 249-residue chain is MSEAAETLDGWYSLHLFYAVDWATFRLVPEDEREAMINEFKTFINDKASAREQQAGDYALYNITGQKADILLWYLRPEMKELNEIENELNKLRIADFFIQTYSYVSVIELGNYLAGKSDEDPYQNPHVRARLYPELPRTEYICFYPMDKRRNETYNWYMLPMEERKKLMYNHGMIGRQYAGKIKQFITGSVGFDDFEWGVTLFSDDVLQFKKIVYEMRFDETTARYGEFGGFYIGHILKTDDFEHFFAI.

Fe-coproporphyrin III-binding positions include arginine 131, 145-149 (YPMDK), histidine 172, and glutamine 185. Tyrosine 145 is an active-site residue.

Belongs to the ChdC family. Type 1 subfamily. The cofactor is Fe-coproporphyrin III.

The enzyme catalyses Fe-coproporphyrin III + 2 H2O2 + 2 H(+) = heme b + 2 CO2 + 4 H2O. It catalyses the reaction Fe-coproporphyrin III + H2O2 + H(+) = harderoheme III + CO2 + 2 H2O. It carries out the reaction harderoheme III + H2O2 + H(+) = heme b + CO2 + 2 H2O. Its pathway is porphyrin-containing compound metabolism; protoheme biosynthesis. Functionally, involved in coproporphyrin-dependent heme b biosynthesis. Catalyzes the decarboxylation of Fe-coproporphyrin III (coproheme) to heme b (protoheme IX), the last step of the pathway. The reaction occurs in a stepwise manner with a three-propionate intermediate. This Staphylococcus haemolyticus (strain JCSC1435) protein is Coproheme decarboxylase.